Consider the following 350-residue polypeptide: Probable transposase-like protein At4g04430 (350 aa).

Disordered regions lie at residues 1–57 and 307–328; these read MPSD…PSVN and QIGQANPNEPPVSAAPEPQVAN. The span at 30–43 shows a compositional bias: low complexity; sequence SGVQGSGSRSGSTV.

This sequence belongs to the transposase 24 family.

The sequence is that of Probable transposase-like protein At4g04430 from Arabidopsis thaliana (Mouse-ear cress).